The primary structure comprises 78 residues: D-alanyl carrier protein (78 aa).

The 78-residue stretch at 1–78 (MDFNQEVLSV…QIIKQLNELR (78 aa)) folds into the Carrier domain. Residue Ser-36 is modified to O-(pantetheine 4'-phosphoryl)serine.

The protein belongs to the DltC family. Post-translationally, 4'-phosphopantetheine is transferred from CoA to a specific serine of apo-DCP.

The protein resides in the cytoplasm. It functions in the pathway cell wall biogenesis; lipoteichoic acid biosynthesis. Carrier protein involved in the D-alanylation of lipoteichoic acid (LTA). The loading of thioester-linked D-alanine onto DltC is catalyzed by D-alanine--D-alanyl carrier protein ligase DltA. The DltC-carried D-alanyl group is further transferred to cell membrane phosphatidylglycerol (PG) by forming an ester bond, probably catalyzed by DltD. D-alanylation of LTA plays an important role in modulating the properties of the cell wall in Gram-positive bacteria, influencing the net charge of the cell wall. The polypeptide is D-alanyl carrier protein (Bacillus licheniformis (strain ATCC 14580 / DSM 13 / JCM 2505 / CCUG 7422 / NBRC 12200 / NCIMB 9375 / NCTC 10341 / NRRL NRS-1264 / Gibson 46)).